The sequence spans 664 residues: DNA ligase (664 aa).

NAD(+) is bound by residues 31-35, 80-81, and glutamate 110; these read DYEFD and SL. Lysine 112 serves as the catalytic N6-AMP-lysine intermediate. NAD(+)-binding residues include arginine 133 and glutamate 169. The BRCT 1 domain maps to 237-257; the sequence is LEKARKWGFKVPAESELKDSI. NAD(+)-binding residues include lysine 284 and lysine 308. Zn(2+) is bound by residues cysteine 402, cysteine 405, cysteine 420, and cysteine 426. The BRCT 2 domain maps to 586-664; the sequence is NQTNILEGNT…SEEDFLKMLE (79 aa).

The protein belongs to the NAD-dependent DNA ligase family. LigA subfamily. Requires Mg(2+) as cofactor. The cofactor is Mn(2+).

It carries out the reaction NAD(+) + (deoxyribonucleotide)n-3'-hydroxyl + 5'-phospho-(deoxyribonucleotide)m = (deoxyribonucleotide)n+m + AMP + beta-nicotinamide D-nucleotide.. In terms of biological role, DNA ligase that catalyzes the formation of phosphodiester linkages between 5'-phosphoryl and 3'-hydroxyl groups in double-stranded DNA using NAD as a coenzyme and as the energy source for the reaction. It is essential for DNA replication and repair of damaged DNA. The polypeptide is DNA ligase (Christiangramia forsetii (strain DSM 17595 / CGMCC 1.15422 / KT0803) (Gramella forsetii)).